A 299-amino-acid chain; its full sequence is UDP-N-acetylenolpyruvoylglucosamine reductase (299 aa).

Residues 27–192 form the FAD-binding PCMH-type domain; that stretch reads KSGGAADWLF…VGATFRGRPG (166 aa). The active site involves Arg-172. The segment at 206 to 225 is disordered; sequence ASREASQPLRSRTGGSTFKN. A compositionally biased stretch (polar residues) spans 208-224; the sequence is REASQPLRSRTGGSTFK. Catalysis depends on Ser-221, which acts as the Proton donor. Glu-291 is an active-site residue.

It belongs to the MurB family. FAD serves as cofactor.

The protein localises to the cytoplasm. It carries out the reaction UDP-N-acetyl-alpha-D-muramate + NADP(+) = UDP-N-acetyl-3-O-(1-carboxyvinyl)-alpha-D-glucosamine + NADPH + H(+). Its pathway is cell wall biogenesis; peptidoglycan biosynthesis. Cell wall formation. The sequence is that of UDP-N-acetylenolpyruvoylglucosamine reductase from Sphingopyxis alaskensis (strain DSM 13593 / LMG 18877 / RB2256) (Sphingomonas alaskensis).